A 122-amino-acid polypeptide reads, in one-letter code: Large ribosomal subunit protein uL14 (122 aa).

The protein belongs to the universal ribosomal protein uL14 family. In terms of assembly, part of the 50S ribosomal subunit. Forms a cluster with proteins L3 and L19. In the 70S ribosome, L14 and L19 interact and together make contacts with the 16S rRNA in bridges B5 and B8.

In terms of biological role, binds to 23S rRNA. Forms part of two intersubunit bridges in the 70S ribosome. This is Large ribosomal subunit protein uL14 from Methylobacterium radiotolerans (strain ATCC 27329 / DSM 1819 / JCM 2831 / NBRC 15690 / NCIMB 10815 / 0-1).